Consider the following 459-residue polypeptide: Argininosuccinate lyase (459 aa).

Belongs to the lyase 1 family. Argininosuccinate lyase subfamily.

The protein resides in the cytoplasm. The enzyme catalyses 2-(N(omega)-L-arginino)succinate = fumarate + L-arginine. It functions in the pathway amino-acid biosynthesis; L-arginine biosynthesis; L-arginine from L-ornithine and carbamoyl phosphate: step 3/3. The sequence is that of Argininosuccinate lyase from Methylobacterium radiotolerans (strain ATCC 27329 / DSM 1819 / JCM 2831 / NBRC 15690 / NCIMB 10815 / 0-1).